We begin with the raw amino-acid sequence, 193 residues long: Bifunctional protein PyrR (193 aa).

Residues 48–49 (TR), R89, R93, 110–118 (DDVLFSGRT), R143, and V167 each bind substrate. A PRPP-binding motif is present at residues 106–118 (VVLVDDVLFSGRT).

It belongs to the purine/pyrimidine phosphoribosyltransferase family. PyrR subfamily.

It catalyses the reaction UMP + diphosphate = 5-phospho-alpha-D-ribose 1-diphosphate + uracil. In terms of biological role, regulates the transcription of the pyrimidine nucleotide (pyr) operon in response to exogenous pyrimidines. Also displays a weak uracil phosphoribosyltransferase activity which is not physiologically significant. This is Bifunctional protein PyrR from Streptomyces coelicolor (strain ATCC BAA-471 / A3(2) / M145).